Reading from the N-terminus, the 383-residue chain is F-box/kelch-repeat protein At2g22030 (383 aa).

An F-box domain is found at 23 to 71; sequence SLLFSSLPYDVVLNCLARVSRRYYPNLSCVSKSFQSLVRSPELAHMRSL. 3 Kelch repeats span residues 130–175, 176–220, and 269–317; these read KIYF…VVNG, KLYV…LMRY, and GVCV…GMVD.

This chain is F-box/kelch-repeat protein At2g22030, found in Arabidopsis thaliana (Mouse-ear cress).